We begin with the raw amino-acid sequence, 174 residues long: Co-chaperone protein HscB homolog (174 aa).

The J domain occupies 2 to 74 (NYFELFKFSP…IRRAEHMLSL (73 aa)).

This sequence belongs to the HscB family. Interacts with HscA and stimulates its ATPase activity.

Functionally, co-chaperone involved in the maturation of iron-sulfur cluster-containing proteins. Seems to help targeting proteins to be folded toward HscA. The protein is Co-chaperone protein HscB homolog of Shewanella baltica (strain OS223).